We begin with the raw amino-acid sequence, 403 residues long: S-adenosylmethionine synthase (403 aa).

His-17 lines the ATP pocket. Residue Asp-19 coordinates Mg(2+). Position 45 (Glu-45) interacts with K(+). 2 residues coordinate L-methionine: Glu-58 and Gln-104. Residues 104–114 form a flexible loop region; the sequence is QSPDIAQGVDT. ATP-binding positions include 179–181, 250–251, Asp-259, 265–266, Ala-282, and Lys-286; these read DGK, KF, and RK. L-methionine is bound at residue Asp-259. Lys-290 contacts L-methionine.

It belongs to the AdoMet synthase family. Homotetramer; dimer of dimers. The cofactor is Mg(2+). It depends on K(+) as a cofactor.

The protein localises to the cytoplasm. It carries out the reaction L-methionine + ATP + H2O = S-adenosyl-L-methionine + phosphate + diphosphate. The protein operates within amino-acid biosynthesis; S-adenosyl-L-methionine biosynthesis; S-adenosyl-L-methionine from L-methionine: step 1/1. Functionally, catalyzes the formation of S-adenosylmethionine (AdoMet) from methionine and ATP. The overall synthetic reaction is composed of two sequential steps, AdoMet formation and the subsequent tripolyphosphate hydrolysis which occurs prior to release of AdoMet from the enzyme. This chain is S-adenosylmethionine synthase, found in Mycobacterium bovis (strain BCG / Pasteur 1173P2).